A 35-amino-acid polypeptide reads, in one-letter code: Photosystem II reaction center protein M (35 aa).

A helical transmembrane segment spans residues 7–27 (GFIASILFVLVPTVFLLILFI).

Belongs to the PsbM family. PSII is composed of 1 copy each of membrane proteins PsbA, PsbB, PsbC, PsbD, PsbE, PsbF, PsbH, PsbI, PsbJ, PsbK, PsbL, PsbM, PsbT, PsbX, PsbY, PsbZ, Psb30/Ycf12, peripheral proteins PsbO, CyanoQ (PsbQ), PsbU, PsbV and a large number of cofactors. It forms dimeric complexes.

The protein localises to the cellular thylakoid membrane. Functionally, one of the components of the core complex of photosystem II (PSII). PSII is a light-driven water:plastoquinone oxidoreductase that uses light energy to abstract electrons from H(2)O, generating O(2) and a proton gradient subsequently used for ATP formation. It consists of a core antenna complex that captures photons, and an electron transfer chain that converts photonic excitation into a charge separation. This subunit is found at the monomer-monomer interface. The sequence is that of Photosystem II reaction center protein M from Microcystis aeruginosa (strain NIES-843 / IAM M-2473).